The primary structure comprises 284 residues: Tropomyosin (284 aa).

Residues 1–39 (MDAIKKKMQAMKLEKDNAMDRADTLEQQNKEANIRAEKT) are disordered. A coiled-coil region spans residues 1–284 (MDAIKKKMQA…DQTFSELSGY (284 aa)). Basic and acidic residues predominate over residues 12-39 (KLEKDNAMDRADTLEQQNKEANIRAEKT).

It belongs to the tropomyosin family. Homodimer.

Tropomyosin, in association with the troponin complex, plays a central role in the calcium dependent regulation of muscle contraction. The polypeptide is Tropomyosin (TM1) (Homarus americanus (American lobster)).